Reading from the N-terminus, the 962-residue chain is IQ motif and SEC7 domain-containing protein 1 (962 aa).

The disordered stretch occupies residues 1–96 (MACRRRYLSS…STSVLRKQAE (96 aa)). Residues 8-19 (LSSLETGSSLST) show a composition bias toward low complexity. Residues 30–39 (SSETGTSLDS) show a composition bias toward polar residues. A phosphoserine mark is found at serine 89, serine 105, and serine 107. An IQ domain is found at 134–163 (TRHAARTIQTAFRQYQMNKNFERLRSSMSE). 3 positions are modified to phosphoserine: serine 180, serine 248, and serine 252. Disordered stretches follow at residues 264–292 (SEEVPASDTARARDTEPKPGLHGMDHRKL), 311–333 (LSPPLPLSQAGDRPSSTESDLRL), and 348–516 (KEDK…DSPA). Basic and acidic residues predominate over residues 273 to 292 (ARARDTEPKPGLHGMDHRKL). 2 stretches are compositionally biased toward basic and acidic residues: residues 365 to 375 (ERPEPRLRVEH) and 429 to 445 (LPREEPELRPRPPRPLE). Low complexity predominate over residues 470 to 488 (DSINSTSNSNDTINCSSES). A phosphoserine mark is found at serine 511 and serine 514. In terms of domain architecture, SEC7 spans 516–709 (AFSNDVIRKR…IGIYERIRKR (194 aa)). The 93-residue stretch at 773-865 (HQREIFLFND…LRESVAEVQE (93 aa)) folds into the PH domain. Phosphoserine is present on serine 891. At tyrosine 910 the chain carries Phosphotyrosine. The segment at 921 to 962 (LSSSLRDLSEAGKRGRRSSAGSLESNVEFQPFQPSQPPVLCS) is disordered. Serine 923 and serine 924 each carry phosphoserine. Residues 939–948 (SAGSLESNVE) are compositionally biased toward polar residues.

This sequence belongs to the BRAG family. Interacts with ARF1 and ARF6. Interacts with GRIA2; the interaction is required for ARF6 activation.

The protein resides in the cytoplasm. The protein localises to the nucleus. Its subcellular location is the postsynaptic density. It localises to the cytoplasmic vesicle. It is found in the secretory vesicle. The protein resides in the synaptic vesicle. In terms of biological role, guanine nucleotide exchange factor for ARF1 and ARF6. Guanine nucleotide exchange factor activity is enhanced by lipid binding. Accelerates GTP binding by ARFs of all three classes. Guanine nucleotide exchange protein for ARF6, mediating internalization of beta-1 integrin. Involved in neuronal development. In neurons, plays a role in the control of vesicle formation by endocytoc cargo. Upon long term depression, interacts with GRIA2 and mediates the activation of ARF6 to internalize synaptic AMPAR receptors. This chain is IQ motif and SEC7 domain-containing protein 1, found in Rattus norvegicus (Rat).